Reading from the N-terminus, the 400-residue chain is Multiphosphoryl transfer protein (400 aa).

The PTS EIIA type-2 domain maps to 2 to 142 (LELTTQDIQL…QQIIAIIKGE (141 aa)). Residue H62 is the Tele-phosphohistidine intermediate; for EIIA activity of the active site. H62 carries the phosphohistidine; by HPr modification. Residues 310–400 (AHTATFRIKN…VAINAGLGEG (91 aa)) form the HPr domain. Catalysis depends on H324, which acts as the Pros-phosphohistidine intermediate; for HPr activity. H324 carries the post-translational modification Phosphohistidine; by EI.

It localises to the cytoplasm. In terms of biological role, the phosphoenolpyruvate-dependent sugar phosphotransferase system (sugar PTS), a major carbohydrate active transport system, catalyzes the phosphorylation of incoming sugar substrates concomitantly with their translocation across the cell membrane. The enzyme II FruAB PTS system is involved in fructose transport. This Vibrio cholerae serotype O1 (strain ATCC 39315 / El Tor Inaba N16961) protein is Multiphosphoryl transfer protein.